Reading from the N-terminus, the 201-residue chain is Proteasome subunit beta 1 (201 aa).

Residue methionine 1 is a propeptide, removed in mature form; by autocatalysis. Threonine 2 (nucleophile) is an active-site residue.

This sequence belongs to the peptidase T1B family. In terms of assembly, the 20S proteasome core is composed of 14 alpha and 14 beta subunits that assemble into four stacked heptameric rings, resulting in a barrel-shaped structure. The two inner rings, each composed of seven catalytic beta subunits, are sandwiched by two outer rings, each composed of seven alpha subunits. The catalytic chamber with the active sites is on the inside of the barrel. Has a gated structure, the ends of the cylinder being occluded by the N-termini of the alpha-subunits. Is capped at one or both ends by the proteasome regulatory ATPase, PAN.

Its subcellular location is the cytoplasm. It catalyses the reaction Cleavage of peptide bonds with very broad specificity.. The formation of the proteasomal ATPase PAN-20S proteasome complex, via the docking of the C-termini of PAN into the intersubunit pockets in the alpha-rings, triggers opening of the gate for substrate entry. Interconversion between the open-gate and close-gate conformations leads to a dynamic regulation of the 20S proteasome proteolysis activity. Functionally, component of the proteasome core, a large protease complex with broad specificity involved in protein degradation. The chain is Proteasome subunit beta 1 from Pyrobaculum calidifontis (strain DSM 21063 / JCM 11548 / VA1).